The following is a 1363-amino-acid chain: ABC multidrug transporter MDR2 (1363 aa).

The chain crosses the membrane as a helical span at residues 65–85 (IALIVIGTIAGIGAGIPFPLL). One can recognise an ABC transmembrane type-1 1 domain in the interval 69-367 (VIGTIAGIGA…MAPFMHIFAS (299 aa)). The N-linked (GlcNAc...) asparagine glycan is linked to asparagine 97. The next 5 helical transmembrane spans lie at 119–139 (VLQV…HTGC), 193–213 (KVGL…VAFL), 215–235 (VATI…MAFG), 301–321 (IQFG…FWQG), and 336–356 (VSVG…FVLS). The region spanning 403-682 (IELQDVTFNY…DGVYAGMVRL (280 aa)) is the ABC transporter 1 domain. 438-445 (GTSGSGKS) lines the ATP pocket. 2 N-linked (GlcNAc...) asparagine glycosylation sites follow: asparagine 552 and asparagine 633. Positions 738-758 (YMPEEADSLPTEPENEKEKPK) are disordered. 3 helical membrane-spanning segments follow: residues 781–801 (LGLI…VIFG), 820–840 (GMLF…AVIV), and 896–916 (LTGT…AGVI). In terms of domain architecture, ABC transmembrane type-1 2 spans 781–1052 (LGLITSIMIG…MFALVPDISK (272 aa)). Asparagine 973 carries an N-linked (GlcNAc...) asparagine glycan. 2 consecutive transmembrane segments (helical) span residues 992 to 1012 (FWLS…YWWG) and 1016 to 1036 (ILAG…LLFS). The 240-residue stretch at 1119–1358 (VQFRNVHFRY…CESYRANVIH (240 aa)) folds into the ABC transporter 2 domain. 1154–1161 (GPSGSGKS) serves as a coordination point for ATP.

This sequence belongs to the ABC transporter superfamily. ABCB family. Multidrug resistance exporter (TC 3.A.1.201) subfamily.

It localises to the cell membrane. In terms of biological role, pleiotropic ABC efflux transporter that may be involved in the modulation susceptibility to a wide range of unrelated cytotoxic compounds. In Trichophyton tonsurans (strain CBS 112818) (Scalp ringworm fungus), this protein is ABC multidrug transporter MDR2.